The following is a 296-amino-acid chain: Phosphoribosylaminoimidazole-succinocarboxamide synthase (296 aa).

This sequence belongs to the SAICAR synthetase family.

The catalysed reaction is 5-amino-1-(5-phospho-D-ribosyl)imidazole-4-carboxylate + L-aspartate + ATP = (2S)-2-[5-amino-1-(5-phospho-beta-D-ribosyl)imidazole-4-carboxamido]succinate + ADP + phosphate + 2 H(+). It participates in purine metabolism; IMP biosynthesis via de novo pathway; 5-amino-1-(5-phospho-D-ribosyl)imidazole-4-carboxamide from 5-amino-1-(5-phospho-D-ribosyl)imidazole-4-carboxylate: step 1/2. The chain is Phosphoribosylaminoimidazole-succinocarboxamide synthase from Geobacter sulfurreducens (strain ATCC 51573 / DSM 12127 / PCA).